The sequence spans 157 residues: Small ribosomal subunit protein uS7 (157 aa).

It belongs to the universal ribosomal protein uS7 family. In terms of assembly, part of the 30S ribosomal subunit. Contacts proteins S9 and S11.

Its function is as follows. One of the primary rRNA binding proteins, it binds directly to 16S rRNA where it nucleates assembly of the head domain of the 30S subunit. Is located at the subunit interface close to the decoding center, probably blocks exit of the E-site tRNA. This chain is Small ribosomal subunit protein uS7, found in Roseiflexus sp. (strain RS-1).